A 515-amino-acid chain; its full sequence is 2,3-bisphosphoglycerate-independent phosphoglycerate mutase (515 aa).

Mn(2+) is bound by residues aspartate 14 and serine 63. Serine 63 is a catalytic residue. Substrate contacts are provided by residues histidine 124, 154-155, arginine 186, arginine 192, 259-262, and lysine 334; these read RD and RADR. Mn(2+)-binding residues include aspartate 401, histidine 405, aspartate 442, histidine 443, and histidine 460.

It belongs to the BPG-independent phosphoglycerate mutase family. The cofactor is Mg(2+). Mn(2+) serves as cofactor.

It catalyses the reaction (2R)-2-phosphoglycerate = (2R)-3-phosphoglycerate. It participates in carbohydrate degradation; glycolysis; pyruvate from D-glyceraldehyde 3-phosphate: step 3/5. With respect to regulation, activity is not affected by 2,3-bisphosphoglycerate. Its function is as follows. Catalyzes the interconversion of 2-phosphoglycerate and 3-phosphoglycerate. The chain is 2,3-bisphosphoglycerate-independent phosphoglycerate mutase from Onchocerca volvulus.